A 326-amino-acid chain; its full sequence is S-methyl-5'-thioadenosine phosphorylase (326 aa).

Residues serine 44, 86 to 87 (RH), and 119 to 120 (SA) contribute to the phosphate site. Methionine 220 provides a ligand contact to substrate. Threonine 221 serves as a coordination point for phosphate. 244–246 (DYD) serves as a coordination point for substrate.

This sequence belongs to the PNP/MTAP phosphorylase family. MTAP subfamily. In terms of assembly, homohexamer. Dimer of a homotrimer.

The catalysed reaction is S-methyl-5'-thioadenosine + phosphate = 5-(methylsulfanyl)-alpha-D-ribose 1-phosphate + adenine. Its pathway is amino-acid biosynthesis; L-methionine biosynthesis via salvage pathway; S-methyl-5-thio-alpha-D-ribose 1-phosphate from S-methyl-5'-thioadenosine (phosphorylase route): step 1/1. In terms of biological role, catalyzes the reversible phosphorylation of S-methyl-5'-thioadenosine (MTA) to adenine and 5-methylthioribose-1-phosphate. Involved in the breakdown of MTA, a major by-product of polyamine biosynthesis. Responsible for the first step in the methionine salvage pathway after MTA has been generated from S-adenosylmethionine. Has broad substrate specificity with 6-aminopurine nucleosides as preferred substrates. This is S-methyl-5'-thioadenosine phosphorylase from Synechocystis sp. (strain PCC 6803 / GT-S).